The following is a 160-amino-acid chain: Cytochrome b6-f complex subunit 4 (160 aa).

Transmembrane regions (helical) follow at residues 36–56, 95–115, and 131–151; these read LLYM…GLAV, LLGV…PFIE, and TIFL…TLPI.

This sequence belongs to the cytochrome b family. PetD subfamily. In terms of assembly, the 4 large subunits of the cytochrome b6-f complex are cytochrome b6, subunit IV (17 kDa polypeptide, petD), cytochrome f and the Rieske protein, while the 4 small subunits are petG, petL, petM and petN. The complex functions as a dimer.

Its subcellular location is the plastid. It localises to the chloroplast thylakoid membrane. Component of the cytochrome b6-f complex, which mediates electron transfer between photosystem II (PSII) and photosystem I (PSI), cyclic electron flow around PSI, and state transitions. The chain is Cytochrome b6-f complex subunit 4 from Staurastrum punctulatum (Green alga).